Reading from the N-terminus, the 1101-residue chain is Coiled-coil domain-containing protein 150 (1101 aa).

Coiled-coil stretches lie at residues 106-299, 398-680, 712-940, and 970-1033; these read RLES…DLTS, AAHA…KEDN, DSEI…NYEQ, and VRNK…EAHR. The span at 1055-1071 shows a compositional bias: basic and acidic residues; it reads SGEDRWQEKDQDVKHDV. A disordered region spans residues 1055-1101; that stretch reads SGEDRWQEKDQDVKHDVMSNQSVLHRWERKQNLRPMPKKYHSEVQRK.

The polypeptide is Coiled-coil domain-containing protein 150 (CCDC150) (Homo sapiens (Human)).